The primary structure comprises 351 residues: Tetraacyldisaccharide 4'-kinase (351 aa).

47-54 (KAGGTGKT) is a binding site for ATP.

It belongs to the LpxK family.

The enzyme catalyses a lipid A disaccharide + ATP = a lipid IVA + ADP + H(+). The protein operates within glycolipid biosynthesis; lipid IV(A) biosynthesis; lipid IV(A) from (3R)-3-hydroxytetradecanoyl-[acyl-carrier-protein] and UDP-N-acetyl-alpha-D-glucosamine: step 6/6. In terms of biological role, transfers the gamma-phosphate of ATP to the 4'-position of a tetraacyldisaccharide 1-phosphate intermediate (termed DS-1-P) to form tetraacyldisaccharide 1,4'-bis-phosphate (lipid IVA). The polypeptide is Tetraacyldisaccharide 4'-kinase (Cytophaga hutchinsonii (strain ATCC 33406 / DSM 1761 / CIP 103989 / NBRC 15051 / NCIMB 9469 / D465)).